The following is a 94-amino-acid chain: uncharacterized protein (94 aa).

The protein belongs to the phD/YefM antitoxin family.

This is an uncharacterized protein from Synechocystis sp. (strain ATCC 27184 / PCC 6803 / Kazusa).